Reading from the N-terminus, the 234-residue chain is Large ribosomal subunit protein uL1 (234 aa).

The protein belongs to the universal ribosomal protein uL1 family. Part of the 50S ribosomal subunit.

In terms of biological role, binds directly to 23S rRNA. The L1 stalk is quite mobile in the ribosome, and is involved in E site tRNA release. Protein L1 is also a translational repressor protein, it controls the translation of the L11 operon by binding to its mRNA. This chain is Large ribosomal subunit protein uL1, found in Pectobacterium carotovorum subsp. carotovorum (strain PC1).